A 155-amino-acid chain; its full sequence is 6,7-dimethyl-8-ribityllumazine synthase (155 aa).

Residues phenylalanine 23, 57-59, and 81-83 contribute to the 5-amino-6-(D-ribitylamino)uracil site; these read AFE and AVI. 86-87 lines the (2S)-2-hydroxy-3-oxobutyl phosphate pocket; it reads ST. Catalysis depends on histidine 89, which acts as the Proton donor. Phenylalanine 114 lines the 5-amino-6-(D-ribitylamino)uracil pocket. Arginine 128 is a binding site for (2S)-2-hydroxy-3-oxobutyl phosphate.

The protein belongs to the DMRL synthase family.

The enzyme catalyses (2S)-2-hydroxy-3-oxobutyl phosphate + 5-amino-6-(D-ribitylamino)uracil = 6,7-dimethyl-8-(1-D-ribityl)lumazine + phosphate + 2 H2O + H(+). It functions in the pathway cofactor biosynthesis; riboflavin biosynthesis; riboflavin from 2-hydroxy-3-oxobutyl phosphate and 5-amino-6-(D-ribitylamino)uracil: step 1/2. In terms of biological role, catalyzes the formation of 6,7-dimethyl-8-ribityllumazine by condensation of 5-amino-6-(D-ribitylamino)uracil with 3,4-dihydroxy-2-butanone 4-phosphate. This is the penultimate step in the biosynthesis of riboflavin. The chain is 6,7-dimethyl-8-ribityllumazine synthase from Trichlorobacter lovleyi (strain ATCC BAA-1151 / DSM 17278 / SZ) (Geobacter lovleyi).